A 508-amino-acid polypeptide reads, in one-letter code: 2,3-bisphosphoglycerate-independent phosphoglycerate mutase (508 aa).

Asp9 and Ser59 together coordinate Mn(2+). Ser59 functions as the Phosphoserine intermediate in the catalytic mechanism. Substrate contacts are provided by residues His120, Arg149 to Asp150, Arg181, Arg187, Arg254 to Arg257, and Lys331. The Mn(2+) site is built by Asp398, His402, Asp439, His440, and His456.

It belongs to the BPG-independent phosphoglycerate mutase family. The cofactor is Mn(2+).

It catalyses the reaction (2R)-2-phosphoglycerate = (2R)-3-phosphoglycerate. It participates in carbohydrate degradation; glycolysis; pyruvate from D-glyceraldehyde 3-phosphate: step 3/5. Functionally, catalyzes the interconversion of 2-phosphoglycerate and 3-phosphoglycerate. This chain is 2,3-bisphosphoglycerate-independent phosphoglycerate mutase, found in Halobacterium salinarum (strain ATCC 700922 / JCM 11081 / NRC-1) (Halobacterium halobium).